The sequence spans 610 residues: Solute carrier family 23 member 3 (610 aa).

A compositionally biased stretch (polar residues) spans 1 to 16 (MSRSPLNPSQLRSVGS). The interval 1–32 (MSRSPLNPSQLRSVGSQDALAPLPPPAPQNPS) is disordered. Residues 1–49 (MSRSPLNPSQLRSVGSQDALAPLPPPAPQNPSTHSWDPLCGSLPWGLSC) lie on the Cytoplasmic side of the membrane. A helical membrane pass occupies residues 50 to 70 (LLALQHVLVMASLLCVSHLLL). The Extracellular segment spans residues 71–85 (LCSLSPGGLSYSPSQ). Residues 86-106 (LLASSFFSCGMSTILQTWMGS) form a helical membrane-spanning segment. The Cytoplasmic portion of the chain corresponds to 107–164 (RLPLVQAPSLEFLIPALVLTSQKLPRAIQTPGNSSLMLHLCRGPSCHGLGHWNTSLQE). A helical membrane pass occupies residues 165–185 (VSGAVVVSGLLQGMMGLLGSP). Residues 186–187 (GH) are Extracellular-facing. A helical membrane pass occupies residues 188-208 (VFPHCGPLVLAPSLVVAGLSA). At 209–211 (HRE) the chain is on the cytoplasmic side. The helical transmembrane segment at 212 to 232 (VAQFCFTHWGLALLVILLMVV) threads the bilayer. The Extracellular portion of the chain corresponds to 233-266 (CSQHLGSCQFHVCPWRRASTSSTHTPLPVFRLLS). A helical transmembrane segment spans residues 267–287 (VLIPVACVWIVSAFVGFSVIP). Topologically, residues 288–316 (QELSAPTKAPWIWLPHPGEWNWPLLTPRA) are cytoplasmic. A helical transmembrane segment spans residues 317–337 (LAAGISMALAASTSSLGCYAL). Over 338 to 355 (CGRLLHLPPPPPHACSRG) the chain is Extracellular. The helical transmembrane segment at 356-376 (LSLEGLGSVLAGLLGSPMGTA) threads the bilayer. The Cytoplasmic segment spans residues 377 to 394 (SSFPNVGKVGLIQAGSQQ). A helical membrane pass occupies residues 395–414 (VAHLVGLLCVGLGLSPRLAQ). The Extracellular portion of the chain corresponds to 415-423 (LLTTIPLPV). The chain crosses the membrane as a helical span at residues 424 to 446 (VGGVLGVTQAVVLSAGFSSFYLA). At 447-452 (DIDSGR) the chain is on the cytoplasmic side. A helical transmembrane segment spans residues 453–472 (NIFIVGFSIFMALLLPRWFR). Residues 473 to 486 (EAPVLFSTGWSPLD) lie on the Extracellular side of the membrane. The chain crosses the membrane as a helical span at residues 487–507 (VLLHSLLTQPIFLAGLSGFLL). Residues 508 to 610 (ENTIPGTQLE…SSREGFRSQK (103 aa)) are Cytoplasmic-facing. The segment at 571-610 (PEDPGDEEGGSSEPEEMADLLPGSGEPCPESSREGFRSQK) is disordered. Positions 573 to 588 (DPGDEEGGSSEPEEMA) are enriched in acidic residues. A compositionally biased stretch (basic and acidic residues) spans 601-610 (SSREGFRSQK).

Belongs to the nucleobase:cation symporter-2 (NCS2) (TC 2.A.40) family.

It localises to the membrane. The enzyme catalyses hypoxanthine(out) + Na(+)(out) = hypoxanthine(in) + Na(+)(in). Acts as a sodium-dependent hypoxanthine transporter. May show xanthine-hypoxanthine exchange activity. This Homo sapiens (Human) protein is Solute carrier family 23 member 3 (SLC23A3).